Reading from the N-terminus, the 122-residue chain is Biogenesis of lysosome-related organelles complex 1 subunit CNL1 (122 aa).

Basic and acidic residues predominate over residues 1 to 10 (MQDNSSHSRE). The tract at residues 1 to 21 (MQDNSSHSRESASAGDDPLGI) is disordered. Residues 63–95 (ENTIDKNIAKFKELLEKCDTLENHYEMLNQLAI) are a coiled coil.

The protein belongs to the BLOC1S4 family. Component of the biogenesis of lysosome-related organelles complex-1 (BLOC-1) composed of at least BLI1, BLS1, CNL1, KXD1, SNN1 and VAB2.

The protein resides in the cytoplasm. Functionally, component of the biogenesis of lysosome-related organelles complex-1 (BLOC-1), a complex that is involved in endosomal cargo sorting. This is Biogenesis of lysosome-related organelles complex 1 subunit CNL1 (CNL1) from Saccharomyces cerevisiae (strain ATCC 204508 / S288c) (Baker's yeast).